The primary structure comprises 428 residues: 3-phosphoshikimate 1-carboxyvinyltransferase (428 aa).

Positions 22, 23, and 27 each coordinate 3-phosphoshikimate. Lys22 serves as a coordination point for phosphoenolpyruvate. Phosphoenolpyruvate is bound by residues Gly96 and Arg124. 3-phosphoshikimate-binding residues include Ser170, Ser171, Gln172, Ser198, Asp314, Asn337, and Lys341. Gln172 serves as a coordination point for phosphoenolpyruvate. The Proton acceptor role is filled by Asp314. Phosphoenolpyruvate contacts are provided by Arg345, Arg387, and Lys412.

The protein belongs to the EPSP synthase family. As to quaternary structure, monomer.

The protein resides in the cytoplasm. The catalysed reaction is 3-phosphoshikimate + phosphoenolpyruvate = 5-O-(1-carboxyvinyl)-3-phosphoshikimate + phosphate. Its pathway is metabolic intermediate biosynthesis; chorismate biosynthesis; chorismate from D-erythrose 4-phosphate and phosphoenolpyruvate: step 6/7. Its function is as follows. Catalyzes the transfer of the enolpyruvyl moiety of phosphoenolpyruvate (PEP) to the 5-hydroxyl of shikimate-3-phosphate (S3P) to produce enolpyruvyl shikimate-3-phosphate and inorganic phosphate. This chain is 3-phosphoshikimate 1-carboxyvinyltransferase, found in Vibrio vulnificus (strain YJ016).